We begin with the raw amino-acid sequence, 305 residues long: Ornithine carbamoyltransferase (305 aa).

Carbamoyl phosphate is bound by residues 50–53, glutamine 77, arginine 101, and 128–131; these read STRT and HPCQ. L-ornithine is bound by residues asparagine 159, aspartate 222, and 226–227; that span reads SM. Carbamoyl phosphate is bound by residues 262–263 and arginine 290; that span reads CL.

Belongs to the aspartate/ornithine carbamoyltransferase superfamily. OTCase family.

The protein resides in the cytoplasm. The enzyme catalyses carbamoyl phosphate + L-ornithine = L-citrulline + phosphate + H(+). The protein operates within amino-acid biosynthesis; L-arginine biosynthesis; L-arginine from L-ornithine and carbamoyl phosphate: step 1/3. Reversibly catalyzes the transfer of the carbamoyl group from carbamoyl phosphate (CP) to the N(epsilon) atom of ornithine (ORN) to produce L-citrulline. The protein is Ornithine carbamoyltransferase of Synechococcus elongatus (strain ATCC 33912 / PCC 7942 / FACHB-805) (Anacystis nidulans R2).